The sequence spans 267 residues: Actin maturation protease (267 aa).

Residues 1–32 form a disordered region; it reads MSNISSVAPPPPPPPMIVTPSTPATTKERPVG. Over residues 8–17 the composition is skewed to pro residues; it reads APPPPPPPMI. Residues 74–188 are peptidase C39-like; sequence SIVQVGPTCG…WALIVGYLVD (115 aa). Cys82 is an active-site residue.

Belongs to the ACTMAP family.

It carries out the reaction N-terminal N(alpha)-acetyl-L-cysteinyl-L-aspartyl-[protein] + H2O = N-terminal L-aspartyl-[protein] + N-acetyl-L-cysteine. Functionally, actin maturation protease that specifically mediates the cleavage of immature acetylated N-terminal actin, thereby contributing to actin maturation. This is Actin maturation protease from Drosophila melanogaster (Fruit fly).